The sequence spans 215 residues: Cytochrome b6 (215 aa).

Residues 32 to 52 form a helical membrane-spanning segment; sequence IFYCFGGITFTCFLVQVATGF. Cysteine 35 contributes to the heme c binding site. The heme b site is built by histidine 86 and histidine 100. A run of 3 helical transmembrane segments spans residues 90-110, 116-136, and 186-206; these read ASMMVLMMILHIFRVYLTGGF, LTWVTGVLMAVCTVSFGVTGY, and LHTFVLPLFTAVFMLMHFLMI. The heme b site is built by histidine 187 and histidine 202.

This sequence belongs to the cytochrome b family. PetB subfamily. As to quaternary structure, the 4 large subunits of the cytochrome b6-f complex are cytochrome b6, subunit IV (17 kDa polypeptide, PetD), cytochrome f and the Rieske protein, while the 4 small subunits are PetG, PetL, PetM and PetN. The complex functions as a dimer. Requires heme b as cofactor. Heme c is required as a cofactor.

The protein localises to the plastid. Its subcellular location is the chloroplast thylakoid membrane. Component of the cytochrome b6-f complex, which mediates electron transfer between photosystem II (PSII) and photosystem I (PSI), cyclic electron flow around PSI, and state transitions. The sequence is that of Cytochrome b6 from Auxenochlorella protothecoides (Green microalga).